The following is a 260-amino-acid chain: MSSSFVYKSLFLVPILAVVAMQLSFVQSVLSLNQTNEYLHHLCLNRQGTYESGSKYARDLNNLIQMISISILGDVVVFSGDNSIYVKLQCRGDSSTSTCRSCLDTAFSGVSRRCLNNKGRIIWYDNCVLTISNISYVWRDRLPEQFLYFNAKDVSGDAKSFNEKTRTLLYKLKEKASSKENIPNKKNYLYATGEESLGKMKLYAMVQCTQDLSIKNCNVCLNWILGKLPKCCNDKQGGRFLSTSCNFRYELYLFVKLTTI.

An N-terminal signal peptide occupies residues Met-1–Ser-31. Gnk2-homologous domains are found at residues Tyr-38 to Tyr-136 and Leu-142 to Phe-254.

This sequence belongs to the cysteine-rich repeat secretory protein family.

It localises to the secreted. The polypeptide is Putative cysteine-rich repeat secretory protein 23 (CRRSP23) (Arabidopsis thaliana (Mouse-ear cress)).